The following is a 300-amino-acid chain: HTH-type transcriptional regulator ArgP (300 aa).

The region spanning 4-60 (PDYRTLQALDAVIRERGFERAAQKLCITQSAVSQRIKQLENLFGQPLLVRTVPPRPT) is the HTH lysR-type domain. The segment at residues 21–40 (FERAAQKLCITQSAVSQRIK) is a DNA-binding region (H-T-H motif).

This sequence belongs to the LysR transcriptional regulatory family. In terms of assembly, homodimer.

Controls the transcription of genes involved in arginine and lysine metabolism. This Photorhabdus laumondii subsp. laumondii (strain DSM 15139 / CIP 105565 / TT01) (Photorhabdus luminescens subsp. laumondii) protein is HTH-type transcriptional regulator ArgP.